We begin with the raw amino-acid sequence, 323 residues long: Aldo-keto reductase family 1 member C1 (323 aa).

Residues 20–24 (GFGTY) and Asp-50 each bind NADP(+). Tyr-24 provides a ligand contact to substrate. Tyr-55 (proton donor) is an active-site residue. Residue His-117 participates in substrate binding. NADP(+) contacts are provided by residues 166 to 167 (SN), Gln-190, and 216 to 222 (YSALGSH). The substrate site is built by His-222 and Trp-227. 270–280 (KSYNEQRIRQN) is a binding site for NADP(+).

This sequence belongs to the aldo/keto reductase family. Monomer. Expressed in all tissues tested including liver, prostate, testis, adrenal gland, brain, uterus, mammary gland and keratinocytes. Highest levels found in liver, mammary gland and brain.

It is found in the cytoplasm. The protein localises to the cytosol. It carries out the reaction a 3alpha-hydroxysteroid + NADP(+) = a 3-oxosteroid + NADPH + H(+). The catalysed reaction is a 3alpha-hydroxysteroid + NAD(+) = a 3-oxosteroid + NADH + H(+). It catalyses the reaction (17R,20S)-17,20-dihydroxypregn-4-en-3-one + NADP(+) = 17alpha-hydroxyprogesterone + NADPH + H(+). The enzyme catalyses (17R,20S)-17,20-dihydroxypregn-4-en-3-one + NAD(+) = 17alpha-hydroxyprogesterone + NADH + H(+). It carries out the reaction (20S)-hydroxypregn-4-en-3-one + NADP(+) = progesterone + NADPH + H(+). The catalysed reaction is (20S)-hydroxypregn-4-en-3-one + NAD(+) = progesterone + NADH + H(+). It catalyses the reaction (1R,2R)-1,2-dihydrobenzene-1,2-diol + NADP(+) = catechol + NADPH + H(+). The enzyme catalyses (S)-indan-1-ol + NAD(+) = indan-1-one + NADH + H(+). It carries out the reaction (S)-indan-1-ol + NADP(+) = indan-1-one + NADPH + H(+). The catalysed reaction is 5alpha-androstane-3alpha,17beta-diol + NADP(+) = 17beta-hydroxy-5alpha-androstan-3-one + NADPH + H(+). It catalyses the reaction 5alpha-androstane-3beta,17beta-diol + NADP(+) = 17beta-hydroxy-5alpha-androstan-3-one + NADPH + H(+). The enzyme catalyses 5alpha-androstane-3alpha,17beta-diol + NAD(+) = 17beta-hydroxy-5alpha-androstan-3-one + NADH + H(+). It carries out the reaction 17beta-hydroxy-5alpha-androstan-3-one + NADP(+) = 5alpha-androstan-3,17-dione + NADPH + H(+). The catalysed reaction is androsterone + NADP(+) = 5alpha-androstan-3,17-dione + NADPH + H(+). It catalyses the reaction androsterone + NADPH + H(+) = 5alpha-androstane-3alpha,17beta-diol + NADP(+). The enzyme catalyses 5alpha-androstane-3alpha,17beta-diol + NAD(+) = androsterone + NADH + H(+). It carries out the reaction 17beta-estradiol + NADP(+) = estrone + NADPH + H(+). The catalysed reaction is 17beta-estradiol + NAD(+) = estrone + NADH + H(+). It catalyses the reaction testosterone + NADP(+) = androst-4-ene-3,17-dione + NADPH + H(+). The enzyme catalyses 20alpha-hydroxy-5beta-pregnan-3-one + NADP(+) = 5beta-pregnan-3,20-dione + NADPH + H(+). It carries out the reaction 3beta-hydroxy-5beta-pregnane-20-one + NADP(+) = 5beta-pregnan-3,20-dione + NADPH + H(+). The catalysed reaction is 3beta-hydroxy-5beta-pregnane-20-one + NADPH + H(+) = 3beta,20alpha-dihydroxy-5beta-pregnane + NADP(+). It catalyses the reaction (3beta,5alpha,17beta)-3-hydroxyandrostan-17-yl sulfate + NADP(+) = 5alpha-dihydrotestosterone sulfate + NADPH + H(+). Its pathway is steroid metabolism. Inhibited by hexestrol with an IC(50) of 9.5 uM, 1,10-phenanthroline with an IC(50) of 55 uM, 1,7-phenanthroline with an IC(50) of 72 uM, flufenamic acid with an IC(50) of 6.0 uM, indomethacin with an IC(50) of 140 uM, ibuprofen with an IC(50) of 950 uM, lithocholic acid with an IC(50) of 25 uM, ursodeoxycholic acid with an IC(50) of 340 uM and chenodeoxycholic acid with an IC(50) of 570 uM. The oxidation reaction is inhibited by low micromolar concentrations of NADPH. In terms of biological role, cytosolic aldo-keto reductase that catalyzes the NADH and NADPH-dependent reduction of ketosteroids to hydroxysteroids. Most probably acts as a reductase in vivo since the oxidase activity measured in vitro is inhibited by physiological concentrations of NADPH. Displays a broad positional specificity acting on positions 3, 17 and 20 of steroids and regulates the metabolism of hormones like estrogens and androgens. May also reduce conjugated steroids such as 5alpha-dihydrotestosterone sulfate. Displays affinity for bile acids. The chain is Aldo-keto reductase family 1 member C1 (AKR1C1) from Homo sapiens (Human).